The primary structure comprises 360 residues: MNMKPATAKISSVALKHNIQTIKQKAPQSKIIAVVKANAYGHGVVFVSAAVEELVDCFGVARLEEALSLRSNGITKPILLLEGFFCDKDLPVIAINNIQTVVHNVEQLEALKAAKVPNPIKVWLKIDTGMHRLGVALEDVEYFYQALRDSENVDPQIGFVSHFSRADELECDYTKLQLTRFLNATQNKAGEKSIAASGGILFWESSHLDWIRPGIIMYGISPINVPAQEYDLTPVMTLTSSLIAIKQHKKGEPVGYGGIWVSDKDTKIGVVAIGYGDGYPRDIPTGTPVYLNGRRVPIVGRVSMDMLTVDLGAEAQDKVGDEVILWGKELPIEEIADISGVISYELITKLTPRVLTEYID.

Lysine 36 acts as the Proton acceptor; specific for D-alanine in catalysis. Lysine 36 bears the N6-(pyridoxal phosphate)lysine mark. Arginine 132 serves as a coordination point for substrate. The active-site Proton acceptor; specific for L-alanine is tyrosine 256. Substrate is bound at residue methionine 304.

The protein belongs to the alanine racemase family. The cofactor is pyridoxal 5'-phosphate.

It catalyses the reaction L-alanine = D-alanine. Its pathway is amino-acid biosynthesis; D-alanine biosynthesis; D-alanine from L-alanine: step 1/1. Functionally, catalyzes the interconversion of L-alanine and D-alanine. May also act on other amino acids. This is Alanine racemase (alr) from Pasteurella multocida (strain Pm70).